We begin with the raw amino-acid sequence, 117 residues long: Small ribosomal subunit protein eS25 (117 aa).

The disordered stretch occupies residues 1–34 (MPPKKDPKGGKAPPSKKKEGSGGGKAKKKKWSKG). Basic residues predominate over residues 25 to 34 (KAKKKKWSKG).

This sequence belongs to the eukaryotic ribosomal protein eS25 family.

In Caenorhabditis elegans, this protein is Small ribosomal subunit protein eS25 (rps-25).